The sequence spans 197 residues: Holliday junction branch migration complex subunit RuvA (197 aa).

Positions 1–65 (MISQVRGTIM…EDAWHLYGFA (65 aa)) are domain I. A domain II region spans residues 66-140 (HAYERAVFQK…DKIDAVGPAP (75 aa)). The tract at residues 140–144 (PATGT) is flexible linker. The domain III stretch occupies residues 145 to 197 (APSPLGDDAVRALIALGYNQTEADRAVRAVVESGAPKDVSSLVRGALSRLTAK).

Belongs to the RuvA family. In terms of assembly, homotetramer. Forms an RuvA(8)-RuvB(12)-Holliday junction (HJ) complex. HJ DNA is sandwiched between 2 RuvA tetramers; dsDNA enters through RuvA and exits via RuvB. An RuvB hexamer assembles on each DNA strand where it exits the tetramer. Each RuvB hexamer is contacted by two RuvA subunits (via domain III) on 2 adjacent RuvB subunits; this complex drives branch migration. In the full resolvosome a probable DNA-RuvA(4)-RuvB(12)-RuvC(2) complex forms which resolves the HJ.

Its subcellular location is the cytoplasm. Its function is as follows. The RuvA-RuvB-RuvC complex processes Holliday junction (HJ) DNA during genetic recombination and DNA repair, while the RuvA-RuvB complex plays an important role in the rescue of blocked DNA replication forks via replication fork reversal (RFR). RuvA specifically binds to HJ cruciform DNA, conferring on it an open structure. The RuvB hexamer acts as an ATP-dependent pump, pulling dsDNA into and through the RuvAB complex. HJ branch migration allows RuvC to scan DNA until it finds its consensus sequence, where it cleaves and resolves the cruciform DNA. The protein is Holliday junction branch migration complex subunit RuvA of Gemmatimonas aurantiaca (strain DSM 14586 / JCM 11422 / NBRC 100505 / T-27).